Here is a 397-residue protein sequence, read N- to C-terminus: MAKEKFERSKPHVNIGTIGHVDHGKTTLTAAITTILGHKGFAKAFKYDEIDKAPEEKERGITISTSHVEYETENRHYAHVDCPGHADYVKNMITGAAQMDGAILVVSAADGPMPQTREHILLASRVGVEHIVVFLNKADQVDDAELIELVEMEVRELMNEYGFPGDDAPVVVGSALKALENPEDDAATQCIMDLMAAVDEYIPTPERATDKPFLMPVEDIFTITGRGTVATGRVERGILKVGDEIEIVGLSDESKKSVITGIEMFRKLLDEAQAGDNIGALLRGVQRDEIQRGQVLAATGSVKPHKSFTGQVYVLKKEEGGRHTPFFNGYRPQFYFRTTDVTGSIALPEGVEMVMPGDHIDMKVELITRVAMDEGLRFAIREGGRTVGSGVVSEITE.

Residues 10–206 enclose the tr-type G domain; the sequence is KPHVNIGTIG…AVDEYIPTPE (197 aa). The segment at 19 to 26 is G1; that stretch reads GHVDHGKT. A GTP-binding site is contributed by 19–26; the sequence is GHVDHGKT. Mg(2+) is bound at residue Thr-26. Residues 60-64 are G2; that stretch reads GITIS. Residues 81–84 form a G3 region; the sequence is DCPG. GTP is bound by residues 81 to 85 and 136 to 139; these read DCPGH and NKAD. Residues 136–139 are G4; that stretch reads NKAD. Residues 174–176 form a G5 region; it reads SAL.

Belongs to the TRAFAC class translation factor GTPase superfamily. Classic translation factor GTPase family. EF-Tu/EF-1A subfamily. Monomer.

The protein localises to the cytoplasm. The enzyme catalyses GTP + H2O = GDP + phosphate + H(+). Its function is as follows. GTP hydrolase that promotes the GTP-dependent binding of aminoacyl-tRNA to the A-site of ribosomes during protein biosynthesis. The sequence is that of Elongation factor Tu from Clostridium tetani (strain Massachusetts / E88).